The chain runs to 136 residues: Large ribosomal subunit protein uL16 (136 aa).

The protein belongs to the universal ribosomal protein uL16 family. As to quaternary structure, part of the 50S ribosomal subunit.

Functionally, binds 23S rRNA and is also seen to make contacts with the A and possibly P site tRNAs. This is Large ribosomal subunit protein uL16 from Aggregatibacter actinomycetemcomitans (Actinobacillus actinomycetemcomitans).